The primary structure comprises 182 residues: Ribosome maturation factor RimM (182 aa).

The region spanning 101-174 (QDEYFIHQLY…QIVVRLLPGL (74 aa)) is the PRC barrel domain.

Belongs to the RimM family. In terms of assembly, binds ribosomal protein uS19.

The protein localises to the cytoplasm. An accessory protein needed during the final step in the assembly of 30S ribosomal subunit, possibly for assembly of the head region. Essential for efficient processing of 16S rRNA. May be needed both before and after RbfA during the maturation of 16S rRNA. It has affinity for free ribosomal 30S subunits but not for 70S ribosomes. This chain is Ribosome maturation factor RimM, found in Roseiflexus sp. (strain RS-1).